The sequence spans 505 residues: MAESAGASSFFPLVVLLLAGSGGSGPRGVQALLCACTSCLQANYTCETDGACMVSIFNLDGMEHHVRTCIPKVELVPAGKPFYCLSSEDLRNTHCCYTDYCNRIDLRVPSGHLKEPEHPSMWGPVELVGIIAGPVFLLFLIIIIVFLVINYHQRVYHNRQRLDMEDPSCEMCLSKDKTLQDLVYDLSTSGSGSGLPLFVQRTVARTIVLQEIIGKGRFGEVWRGRWRGGDVAVKIFSSREERSWFREAEIYQTVMLRHENILGFIAADNKDNGTWTQLWLVSDYHEHGSLFDYLNRYTVTIEGMIKLALSAASGLAHLHMEIVGTQGKPGIAHRDLKSKNILVKKNGMCAIADLGLAVRHDAVTDTIDIAPNQRVGTKRYMAPEVLDETINMKHFDSFKCADIYALGLVYWEIARRCNSGGVHEEYQLPYYDLVPSDPSIEEMRKVVCDQKLRPNIPNWWQSYEALRVMGKMMRECWYANGAARLTALRIKKTLSQLSVQEDVKI.

Residues 1-23 (MAESAGASSFFPLVVLLLAGSGG) form the signal peptide. Topologically, residues 24–126 (SGPRGVQALL…EHPSMWGPVE (103 aa)) are extracellular. Asparagine 43 carries an N-linked (GlcNAc...) asparagine glycan. A helical membrane pass occupies residues 127–149 (LVGIIAGPVFLLFLIIIIVFLVI). The Cytoplasmic segment spans residues 150–505 (NYHQRVYHNR…QLSVQEDVKI (356 aa)). One can recognise a GS domain in the interval 177-206 (KTLQDLVYDLSTSGSGSGLPLFVQRTVART). In terms of domain architecture, Protein kinase spans 207 to 497 (IVLQEIIGKG…LRIKKTLSQL (291 aa)). Residues 213–221 (IGKGRFGEV) and lysine 234 contribute to the ATP site. Aspartate 335 functions as the Proton acceptor in the catalytic mechanism. A Phosphotyrosine modification is found at tyrosine 380.

This sequence belongs to the protein kinase superfamily. TKL Ser/Thr protein kinase family. TGFB receptor subfamily. Forms an activin receptor complex with activin receptor type-2 (ACVR2A or ACVR2B). Part of a complex consisting of MAGI2/ARIP1, ACVR2A, ACVR1B and SMAD3. Interacts with SMAD2 and SMAD3. Interacts with SMAD7. Interacts with FKBP1A. Interacts with IGSF1. Interacts with CRIPTO. Interacts with TDP2. Interacts with TSC22D1/TSC-22. Mg(2+) is required as a cofactor. Mn(2+) serves as cofactor. Post-translationally, autophosphorylated. Phosphorylated by activin receptor type-2 (ACVR2A or ACVR2B) in response to activin-binding at serine and threonine residues in the GS domain. Phosphorylation of ACVR1B by activin receptor type-2 regulates association with SMAD7. Ubiquitinated. Level of ubiquitination is regulated by the SMAD7-SMURF1 complex. In terms of processing, ubiquitinated. In terms of tissue distribution, expressed in many tissues, most strongly in kidney, pancreas, brain, lung, and liver.

Its subcellular location is the cell membrane. The catalysed reaction is L-threonyl-[receptor-protein] + ATP = O-phospho-L-threonyl-[receptor-protein] + ADP + H(+). It catalyses the reaction L-seryl-[receptor-protein] + ATP = O-phospho-L-seryl-[receptor-protein] + ADP + H(+). With respect to regulation, activin receptor type-2 (ACVR2A or ACVR2B) activates the type-1 receptor through phosphorylation of its regulatory GS domain. Its function is as follows. Transmembrane serine/threonine kinase activin type-1 receptor forming an activin receptor complex with activin receptor type-2 (ACVR2A or ACVR2B). Transduces the activin signal from the cell surface to the cytoplasm and is thus regulating a many physiological and pathological processes including neuronal differentiation and neuronal survival, hair follicle development and cycling, FSH production by the pituitary gland, wound healing, extracellular matrix production, immunosuppression and carcinogenesis. Activin is also thought to have a paracrine or autocrine role in follicular development in the ovary. Within the receptor complex, type-2 receptors (ACVR2A and/or ACVR2B) act as a primary activin receptors whereas the type-1 receptors like ACVR1B act as downstream transducers of activin signals. Activin binds to type-2 receptor at the plasma membrane and activates its serine-threonine kinase. The activated receptor type-2 then phosphorylates and activates the type-1 receptor such as ACVR1B. Once activated, the type-1 receptor binds and phosphorylates the SMAD proteins SMAD2 and SMAD3, on serine residues of the C-terminal tail. Soon after their association with the activin receptor and subsequent phosphorylation, SMAD2 and SMAD3 are released into the cytoplasm where they interact with the common partner SMAD4. This SMAD complex translocates into the nucleus where it mediates activin-induced transcription. Inhibitory SMAD7, which is recruited to ACVR1B through FKBP1A, can prevent the association of SMAD2 and SMAD3 with the activin receptor complex, thereby blocking the activin signal. Activin signal transduction is also antagonized by the binding to the receptor of inhibin-B via the IGSF1 inhibin coreceptor. ACVR1B also phosphorylates TDP2. In Homo sapiens (Human), this protein is Activin receptor type-1B (ACVR1B).